The primary structure comprises 91 residues: Acyl-CoA-binding domain-containing protein 2 (91 aa).

The ACB domain occupies 3–88; the sequence is LQEEFEEFAE…VKQLLEEASA (86 aa). An acyl-CoA-binding positions include lysine 15, 30 to 34, lysine 52, lysine 56, and tyrosine 75; that span reads YGLYK.

Belongs to the ACBP family. Highly expressed in leaves. Expressed at low levels in roots and seeds.

It localises to the cytoplasm. Its subcellular location is the cytosol. Binds medium- and long-chain acyl-CoA esters with high affinity. Can interact in vitro with linolenoyl-CoA. Binds palmitoyl-CoA and linoleoyl-CoA in vitro. Binds phosphatidic acid (PA) and phosphatidylcholine (PC) in vitro. May play a role in the biosynthesis of phospholipids. The sequence is that of Acyl-CoA-binding domain-containing protein 2 from Oryza sativa subsp. japonica (Rice).